We begin with the raw amino-acid sequence, 439 residues long: Chromosomal replication initiator protein DnaA (439 aa).

The domain I, interacts with DnaA modulators stretch occupies residues 1 to 72 (MEQFSAFKLL…SKLYDDIRAV (72 aa)). The segment at 72–99 (VRFVNEQDFFINLAKLEEDNRETLYQSS) is domain II. Residues 100-322 (GLSKNFTFKN…GIATKLLFYV (223 aa)) are domain III, AAA+ region. Residues G144, G146, K147, and T148 each contribute to the ATP site. Residues 323–439 (KTTKQNLINN…LQDIITSLVI (117 aa)) are domain IV, binds dsDNA.

The protein belongs to the DnaA family. Oligomerizes as a right-handed, spiral filament on DNA at oriC.

It is found in the cytoplasm. Plays an essential role in the initiation and regulation of chromosomal replication. ATP-DnaA binds to the origin of replication (oriC) to initiate formation of the DNA replication initiation complex once per cell cycle. Binds the DnaA box (a 9 base pair repeat at the origin) and separates the double-stranded (ds)DNA. Forms a right-handed helical filament on oriC DNA; dsDNA binds to the exterior of the filament while single-stranded (ss)DNA is stabiized in the filament's interior. The ATP-DnaA-oriC complex binds and stabilizes one strand of the AT-rich DNA unwinding element (DUE), permitting loading of DNA polymerase. After initiation quickly degrades to an ADP-DnaA complex that is not apt for DNA replication. Binds acidic phospholipids. The polypeptide is Chromosomal replication initiator protein DnaA (Mycoplasma pneumoniae (strain ATCC 29342 / M129 / Subtype 1) (Mycoplasmoides pneumoniae)).